Consider the following 489-residue polypeptide: uncharacterized protein (489 aa).

Disordered stretches follow at residues 1-94, 109-229, 300-389, and 428-461; these read MIEE…GSLD, NRNQ…SDDD, DDNI…TSIQ, and SESG…TLVK. Composition is skewed to low complexity over residues 43–53 and 64–77; these read LLVQQSNQSVK and SNGF…NIHD. The span at 121–138 shows a compositional bias: acidic residues; it reads NFSEDDEDDDAEDDDSSD. Residues 144–154 are compositionally biased toward basic residues; it reads KKNKPKKPSKL. The span at 155–164 shows a compositional bias: basic and acidic residues; that stretch reads MKHDSVDGKN. The segment covering 173 to 199 has biased composition (basic residues); sequence SKKKVQHQLKEKNKKKGIKNDKKKSKP. A compositionally biased stretch (acidic residues) spans 308–343; the sequence is NDNDNDNDDDNDNDNDNDNDNDNDNDDDENGEDNGE. 2 stretches are compositionally biased toward low complexity: residues 344-389 and 433-449; these read DLNI…TSIQ and SISS…SSKS.

This is an uncharacterized protein from Dictyostelium discoideum (Social amoeba).